A 321-amino-acid chain; its full sequence is Collectin-43 (321 aa).

The signal sequence occupies residues 1 to 20 (MLPLPLSILLLLTQSQSFLG). Residues 43–163 (PADSLRGHDG…GEKGARGETS (121 aa)) form a disordered region. A compositionally biased stretch (basic and acidic residues) spans 47–65 (LRGHDGRDGKEGPQGEKGD). The region spanning 49–162 (GHDGRDGKEG…PGEKGARGET (114 aa)) is the Collagen-like domain. Composition is skewed to gly residues over residues 100 to 109 (GPEGGVGAPG) and 124 to 133 (GTPGPGGAIG). Over residues 147-159 (KGDRGDPGEKGAR) the composition is skewed to basic and acidic residues. A C-type lectin domain is found at 222-321 (QLCREAKGQL…REERLVICEF (100 aa)). 2 cysteine pairs are disulfide-bonded: Cys224-Cys319 and Cys297-Cys311.

This sequence belongs to the SFTPD family. As to quaternary structure, oligomeric complex of 4 set of homotrimers. Hydroxylated. In terms of tissue distribution, liver specific.

It is found in the secreted. Its function is as follows. Lectin that binds to various sugars: mannose = ManNAc &gt; fucose &gt; GlcNAc &gt; glucose = maltose &gt; galactose &gt; lactose &gt; GalNAc. Could play a role in immune defense. This is Collectin-43 (CL43) from Bos taurus (Bovine).